A 472-amino-acid chain; its full sequence is Proline--tRNA ligase (472 aa).

This sequence belongs to the class-II aminoacyl-tRNA synthetase family. ProS type 3 subfamily. As to quaternary structure, homodimer.

It localises to the cytoplasm. It catalyses the reaction tRNA(Pro) + L-proline + ATP = L-prolyl-tRNA(Pro) + AMP + diphosphate. In terms of biological role, catalyzes the attachment of proline to tRNA(Pro) in a two-step reaction: proline is first activated by ATP to form Pro-AMP and then transferred to the acceptor end of tRNA(Pro). The sequence is that of Proline--tRNA ligase from Ureaplasma urealyticum serovar 10 (strain ATCC 33699 / Western).